Here is a 449-residue protein sequence, read N- to C-terminus: Baeyer-Villiger oxidase GME11358 (449 aa).

This sequence belongs to the questin oxidase family.

It functions in the pathway secondary metabolite biosynthesis. Its function is as follows. Baeyer-Villiger oxidase; part of the gene cluster that mediates the biosynthesis of dibenzodioxocinones such as pestalotiollide B, a novel class of inhibitors against cholesterol ester transfer protein (CEPT). The biosynthesis initiates from condensation of acetate and malonate units catalyzed by the non-reducing PKS pks8/GME11356. Pks8/GME11356 lacks a thioesterase (TE) domain, which is important to the cyclizing of the third ring of atrochrysone carboxylic acid, and the esterase GME11355 might play the role of TE and catalyzes the cyclization reaction of the C ring. The lactamase-like protein GME11357 (or other beta-lactamases in Pestalotiopsis microspora) probably hydrolyzes the thioester bond between the ACP of pks8/GME11356 and the intermediate to release atrochrysone carboxylic acid, which is spontaneously dehydrates to form endocrocin anthrone. Endocrocin anthrone is further converted to emodin via the endocrocin intermediate. Emodin is then oxidized by several enzymes such as the Baeyer-Villiger oxidase GME11358, the oxidoreductase GME11367, the short chain dehydrogenase/reductase GME11373, as well as by other oxidoreductases from the cluster, to modify the A and C rings and open the B ring, and finally yield monodictyphenone. The prenyltransferase GME11375 may catalyze the addition reaction between the C5 side chains and the carbon bone of dibenzodioxocinones. The remaining biochemical reactions to the final product dibenzodioxocinones should be methylation catalyzed by methyltransferase GME11366 and reduction and lactonization reaction catalyzed by a series of oxidordeuctases. The polypeptide is Baeyer-Villiger oxidase GME11358 (Pestalotiopsis microspora).